Here is a 374-residue protein sequence, read N- to C-terminus: P2Y purinoceptor 2 (374 aa).

The Extracellular segment spans residues 1 to 32 (MAAGLDSWNSTINGTWEGDELGYKCRFNEDFK). Asparagine 9 and asparagine 13 each carry an N-linked (GlcNAc...) asparagine glycan. The chain crosses the membrane as a helical span at residues 33-59 (YVLLPVSYGVVCVLGLCLNVVALYIFL). Residues 60 to 70 (CRLKTWNASTT) are Cytoplasmic-facing. A helical transmembrane segment spans residues 71–93 (YMFHLAVSDSLYAASLPLLVYYY). The Extracellular segment spans residues 94-110 (AQGDHWPFSTVLCKLVR). Cysteine 106 and cysteine 183 form a disulfide bridge. The chain crosses the membrane as a helical span at residues 111-129 (FLFYTNLYCSILFLTCISV). Residues 130–152 (HRCLGVLRPLHSLSWGHARYARR) lie on the Cytoplasmic side of the membrane. A helical membrane pass occupies residues 153–172 (VAAVVWVLVLACQAPVLYFV). The Extracellular segment spans residues 173-194 (TTSVRGTRITCHDTSARELFSH). Residues 195-220 (FVAYSSVMLGLLFAVPFSIILVCYVL) traverse the membrane as a helical segment. The Cytoplasmic segment spans residues 221 to 245 (MARRLLKPAYGTTGLPRAKRKSVRT). The chain crosses the membrane as a helical span at residues 246–268 (IALVLAVFALCFLPFHVTRTLYY). Over 269–286 (SFRSLDLSCHTLNAINMA) the chain is Extracellular. A helical transmembrane segment spans residues 287–308 (YKITRPLASANSCLDPVLYFLA). The Cytoplasmic segment spans residues 309 to 374 (GQRLVRFARD…AGSETKDIRL (66 aa)). The tract at residues 318–374 (DAKPATEPTPSPQARRKLGLHRPNRTDTVRKDLSISSDDSRRTESTPAGSETKDIRL) is disordered. The segment covering 331-340 (ARRKLGLHRP) has biased composition (basic residues). The segment covering 341–361 (NRTDTVRKDLSISSDDSRRTE) has biased composition (basic and acidic residues).

This sequence belongs to the G-protein coupled receptor 1 family.

The protein localises to the cell membrane. Receptor for ATP and UTP coupled to G-proteins that activate a phosphatidylinositol-calcium second messenger system. The affinity range is UTP = ATP &gt; ATP-gamma-S &gt;&gt; 2-methylthio-ATP = ADP. The sequence is that of P2Y purinoceptor 2 (P2ry2) from Rattus norvegicus (Rat).